We begin with the raw amino-acid sequence, 211 residues long: Superoxide dismutase [Mn] (211 aa).

Mn(2+) is bound by residues histidine 27, histidine 82, aspartate 165, and histidine 169.

This sequence belongs to the iron/manganese superoxide dismutase family. As to quaternary structure, homodimer. Mn(2+) is required as a cofactor.

The enzyme catalyses 2 superoxide + 2 H(+) = H2O2 + O2. Destroys superoxide anion radicals which are normally produced within the cells and which are toxic to biological systems. The protein is Superoxide dismutase [Mn] (sodA) of Bordetella pertussis (strain Tohama I / ATCC BAA-589 / NCTC 13251).